A 670-amino-acid polypeptide reads, in one-letter code: Cyclic di-GMP phosphodiesterase PdeA (670 aa).

The region spanning 428–670 is the EAL domain; sequence QNKIFQYILK…GFLWHKPEPI (243 aa).

The enzyme catalyses 3',3'-c-di-GMP + H2O = 5'-phosphoguanylyl(3'-&gt;5')guanosine + H(+). Its function is as follows. Phosphodiesterase (PDE) that catalyzes the hydrolysis of cyclic diguanylate (c-di-GMP) to pGpG. The sequence is that of Cyclic di-GMP phosphodiesterase PdeA from Borreliella burgdorferi (strain ATCC 35210 / DSM 4680 / CIP 102532 / B31) (Borrelia burgdorferi).